A 129-amino-acid chain; its full sequence is Large ribosomal subunit protein bL19 (129 aa).

It belongs to the bacterial ribosomal protein bL19 family.

Its function is as follows. This protein is located at the 30S-50S ribosomal subunit interface and may play a role in the structure and function of the aminoacyl-tRNA binding site. The chain is Large ribosomal subunit protein bL19 from Paraburkholderia phytofirmans (strain DSM 17436 / LMG 22146 / PsJN) (Burkholderia phytofirmans).